Here is a 403-residue protein sequence, read N- to C-terminus: Acetate kinase (403 aa).

Asn-7 contributes to the Mg(2+) binding site. Residue Lys-14 participates in ATP binding. A substrate-binding site is contributed by Arg-90. The active-site Proton donor/acceptor is Asp-147. ATP contacts are provided by residues 207–211 (HIGNG), 283–285 (DMR), and 331–335 (GVGEN). Glu-386 contributes to the Mg(2+) binding site.

It belongs to the acetokinase family. Homodimer. It depends on Mg(2+) as a cofactor. The cofactor is Mn(2+).

It is found in the cytoplasm. The catalysed reaction is acetate + ATP = acetyl phosphate + ADP. The protein operates within metabolic intermediate biosynthesis; acetyl-CoA biosynthesis; acetyl-CoA from acetate: step 1/2. In terms of biological role, catalyzes the formation of acetyl phosphate from acetate and ATP. Can also catalyze the reverse reaction. Phosphorylates propionate (54%) in addition to acetate (100%). Uses GTP (100%), ITP (163%), UTP (56%), and CTP (21%) as phosphoryl donors in addition to ATP (100%). This is Acetate kinase from Thermotoga maritima (strain ATCC 43589 / DSM 3109 / JCM 10099 / NBRC 100826 / MSB8).